A 187-amino-acid polypeptide reads, in one-letter code: Large ribosomal subunit protein uL10 (187 aa).

Belongs to the universal ribosomal protein uL10 family. As to quaternary structure, part of the ribosomal stalk of the 50S ribosomal subunit. The N-terminus interacts with L11 and the large rRNA to form the base of the stalk. The C-terminus forms an elongated spine to which L12 dimers bind in a sequential fashion forming a multimeric L10(L12)X complex.

Functionally, forms part of the ribosomal stalk, playing a central role in the interaction of the ribosome with GTP-bound translation factors. This Synechococcus sp. (strain JA-3-3Ab) (Cyanobacteria bacterium Yellowstone A-Prime) protein is Large ribosomal subunit protein uL10.